A 132-amino-acid polypeptide reads, in one-letter code: UPF0299 membrane protein YohJ (132 aa).

Residues 1-6 (MSKTLN) lie on the Periplasmic side of the membrane. The helical transmembrane segment at 7-27 (IIWQYLRAFVLIYACLYAGIF) threads the bilayer. The Cytoplasmic segment spans residues 28–30 (IAS). The helical transmembrane segment at 31-51 (LLPVTIPGSIIGMLILFVLLA) threads the bilayer. Topologically, residues 52–62 (LQILPAKWVNP) are periplasmic. A helical transmembrane segment spans residues 63–83 (GCYVLIRYMALLFVPIGVGVM). The Cytoplasmic segment spans residues 84–92 (QYFDLLRAQ). Residues 93–113 (FGPVVVSCAISTLVVFLVVSW) traverse the membrane as a helical segment. The Periplasmic segment spans residues 114–132 (SSQLVHGERKVVGQKGSEE).

Belongs to the UPF0299 family.

Its subcellular location is the cell inner membrane. The chain is UPF0299 membrane protein YohJ (yohJ) from Escherichia coli O157:H7.